We begin with the raw amino-acid sequence, 362 residues long: 3-dehydroquinate synthase (362 aa).

Residues 70-75 (EGEQYK), 104-108 (GVIGD), 128-129 (TT), K141, K150, and 168-171 (TLTT) contribute to the NAD(+) site. Residues E183, H246, and H263 each contribute to the Zn(2+) site.

Belongs to the sugar phosphate cyclases superfamily. Dehydroquinate synthase family. Co(2+) serves as cofactor. It depends on Zn(2+) as a cofactor. NAD(+) is required as a cofactor.

It is found in the cytoplasm. The enzyme catalyses 7-phospho-2-dehydro-3-deoxy-D-arabino-heptonate = 3-dehydroquinate + phosphate. It functions in the pathway metabolic intermediate biosynthesis; chorismate biosynthesis; chorismate from D-erythrose 4-phosphate and phosphoenolpyruvate: step 2/7. Its function is as follows. Catalyzes the conversion of 3-deoxy-D-arabino-heptulosonate 7-phosphate (DAHP) to dehydroquinate (DHQ). In Histophilus somni (strain 129Pt) (Haemophilus somnus), this protein is 3-dehydroquinate synthase.